The sequence spans 628 residues: E3 SUMO-protein ligase PIAS3 (628 aa).

Residues 1–200 (MAELGELKHM…QLRFCLCETS (200 aa)) are interaction with CCAR2. Residues 11–45 (VMSFRVSELQVLLGFAGRNKSGRKHELLAKALHLL) enclose the SAP domain. The LXXLL motif signature appears at 19–23 (LQVLL). Glycyl lysine isopeptide (Lys-Gly) (interchain with G-Cter in SUMO2) cross-links involve residues Lys-46 and Lys-56. Residues 72 to 95 (PSDLSLLSLPPGTSPVGSPSPLAS) form a disordered region. One can recognise a PINIT domain in the interval 115 to 280 (MHPPLPQPVH…SLSVYLVRQL (166 aa)). Residues Lys-230 and Lys-307 each participate in a glycyl lysine isopeptide (Lys-Gly) (interchain with G-Cter in SUMO2) cross-link. Residues 312–393 (PDSEVATTSL…FMEILNSCSD (82 aa)) form an SP-RING-type zinc finger. Zn(2+) is bound by residues Cys-343, His-345, Cys-366, and Cys-369. Positions 450 to 460 (LTIESSSDEED) are SUMO1-binding. Glycyl lysine isopeptide (Lys-Gly) (interchain with G-Cter in SUMO2) cross-links involve residues Lys-466 and Lys-482. The tract at residues 573-618 (LAPTLGSSHRSATPAPAPGRVSSIVAPGSSLREGHGGPLPSGPSLT) is disordered.

Belongs to the PIAS family. In terms of assembly, binds SUMO1 and UBE2I. Interacts with AR, BCL11A, GFI1, HMGA2, IRF1, MITF, NCOA2, as well as with STAT3, after treatment with IL6, CNTF or OSM and with STAT5, after PRL stimulation. Interacts with PLAG1. Interacts with ZFHX3. Interacts with MTA1. Interacts with CCAR2 (via N-terminus). Interacts with TRIM8. Interacts with PRDM1. Sumoylated. Widely expressed, with highest levels in lung, kidney and spleen.

Its subcellular location is the cytoplasm. It localises to the nucleus. The protein resides in the nucleus speckle. Its pathway is protein modification; protein sumoylation. In terms of biological role, functions as an E3-type small ubiquitin-like modifier (SUMO) ligase, stabilizing the interaction between UBE2I and the substrate, and as a SUMO-tethering factor. Plays a crucial role as a transcriptional coregulation in various cellular pathways, including the STAT pathway and the steroid hormone signaling pathway. The effects of this transcriptional coregulation, transactivation or silencing, may vary depending upon the biological context. Enhances the sumoylation of MTA1 and may participate in its paralog-selective sumoylation. Sumoylates CCAR2 which promotes its interaction with SIRT1. Diminishes the sumoylation of ZFHX3 by preventing the colocalization of ZFHX3 with SUMO1 in the nucleus. The chain is E3 SUMO-protein ligase PIAS3 (Pias3) from Rattus norvegicus (Rat).